The chain runs to 374 residues: Methionine import ATP-binding protein MetN 2 (374 aa).

The ABC transporter domain maps to 32–271 (VRFVGLGKTY…PQHEVSQTLL (240 aa)). 68–75 (GRSGAGKS) lines the ATP pocket.

It belongs to the ABC transporter superfamily. Methionine importer (TC 3.A.1.24) family. As to quaternary structure, the complex is composed of two ATP-binding proteins (MetN), two transmembrane proteins (MetI) and a solute-binding protein (MetQ).

It is found in the cell inner membrane. It carries out the reaction L-methionine(out) + ATP + H2O = L-methionine(in) + ADP + phosphate + H(+). The enzyme catalyses D-methionine(out) + ATP + H2O = D-methionine(in) + ADP + phosphate + H(+). Part of the ABC transporter complex MetNIQ involved in methionine import. Responsible for energy coupling to the transport system. This chain is Methionine import ATP-binding protein MetN 2, found in Pseudomonas fluorescens (strain Pf0-1).